The following is a 362-amino-acid chain: Quinolone epoxide rearrangement protein penF (362 aa).

Residue His220 is part of the active site. Glu222 functions as the Broensted acid in the catalytic mechanism.

Belongs to the quinolone epoxide rearrangement protein penF family.

It carries out the reaction [(1'E)-5'-(3',3'-dimethyloxiran-2'-yl)-3'-hydroxy-3'-methylpent-1'-en-1'-yl]-quinolinone B = yaequinolone D. The protein operates within secondary metabolite biosynthesis. It participates in alkaloid biosynthesis. Its pathway is mycotoxin biosynthesis. Functionally, quinolone epoxide rearrangement protein; part of the gene cluster that mediates the biosynthesis of penigequinolones, potent insecticidal alkaloids that contain a highly modified 10-carbon prenyl group. The first stage is catalyzed by the nonribosomal peptide synthetase penN that condenses anthranilic acid and O-methyl-L-tyrosine to produce 4'-methoxycyclopeptin. 4'-methoxycyclopeptin is then converted to 4'-methoxydehydrocyclopeptin by the ketoglutarate-dependent dioxygenase penM through dehydrogenation to form a double bond between C-alpha and C-beta of the O-methyltyrosine side chain. PenM also converts its first product methoxydehydrocyclopeptin to 4'-methoxycyclopenin. The following conversion of 4'methoxycyclopenin into 4'-methoxyviridicatin is catalyzed by the cyclopenase penL. 4'-methoxyviridicatin is the precursor of quinolone natural products, and is further converted to quinolinone B. The prenyltransferase penI then catalyzes the canonical Friedel-Crafts alkylation of quinolinone B with dimethylallyl cation to yield dimethylallyl quinolone, which is subjected to FAD-dependent dehydrogenation by the FAD-linked oxidoreductase penH to yield conjugated aryl diene. The delta(3') double bond then serves as the site of the second alkylation with DMAPP catalyzed by the prenyltransferase penG to yield a carbenium ion intermediate, which can be attacked by H(2)O to yield a styrenyl quinolone containing a C3'-hydroxyprenyl chain, or undergo cyclization to yield yaequinolones J1 and J2. The conversion of the styrenyl quinolone into the tetrahydrofuran-containing yaequinolone C is performed by the FAD-dependent monooxygenase penE and involves epoxidation of the terminal C7'-C8' olefin, followed by epoxide ring opening initiated by the C3' hydroxyl group. The predicted cysteine hydrolase penJ acts as an epoxide hydrolase that enhances the rate of the 5-exo-tet cyclization step, increasing the yield of yaequinolone C. PenF catalyzes the cationic rearrangement of the epoxide formed by penE (before ring opening to produce yaequinolone C) into yaequinolone D. Finally, the short-chain dehydrogenase/reductase (SDR)-like reductase penD, catalyzes both the dehydration of yaequinolone D and the reduction of the resulting oxonium to yield penigequinolone. In Penicillium thymicola, this protein is Quinolone epoxide rearrangement protein penF.